The following is a 387-amino-acid chain: 3-hydroxy-D-aspartate aldolase (387 aa).

The residue at position 62 (Lys-62) is an N6-(pyridoxal phosphate)lysine. Pyridoxal 5'-phosphate is bound at residue Gln-85. A disordered region spans residues 199–228 (HGQLRGPQGQAGRRHCPGERGRGRAGGRGL). Pyridoxal 5'-phosphate-binding positions include Thr-238, 256-257 (GS), and Tyr-265. Positions 355 and 357 each coordinate Mg(2+).

The protein belongs to the DSD1 family. As to quaternary structure, homodimer. Pyridoxal 5'-phosphate is required as a cofactor. It depends on Mn(2+) as a cofactor. Mg(2+) serves as cofactor. Requires Co(2+) as cofactor.

It carries out the reaction (3S)-3-hydroxy-D-aspartate = glyoxylate + glycine. The enzyme catalyses (3R)-3-hydroxy-D-aspartate = glyoxylate + glycine. Its function is as follows. Catalyzes the condensation of glyoxylate and glycine into (2R,3S)-beta-hydroxyaspartate ((3S)-3-hydroxy-D-aspartate). Functions in glyoxylate assimilation via the beta-hydroxyaspartate cycle (BHAC). In vitro catalyzes the cleavage of both D-erythro- and D-threo-3-hydroxyaspartate to glycine and glyoxylate. Also acts on D-threonine, D-3-phenylserine and D-3-3,4-methylenedioxyphenylserine. The sequence is that of 3-hydroxy-D-aspartate aldolase (dhaa) from Paracoccus denitrificans.